The primary structure comprises 2166 residues: Protein TIC236, chloroplastic (2166 aa).

Residues 1 to 37 (MSLRLQNPFLSTPLLHGSFNRREKRINVARRAFRSKR) constitute a chloroplast transit peptide. Topologically, residues 38–101 (IYSEKKQNDW…RSLAPVWEEG (64 aa)) are stromal. Residues 102–122 (LFFLRCSVFFAVISGVCLLVW) form a helical membrane-spanning segment. Residues 123–2166 (YGQNKARVFV…LFEYSATSQD (2044 aa)) lie on the Chloroplast intermembrane side of the membrane. The disordered stretch occupies residues 1611-1649 (MSEGEVSETDRGGAVKIPSWAKEKEDDEKRTSRDRSEER). The segment covering 1631 to 1649 (AKEKEDDEKRTSRDRSEER) has biased composition (basic and acidic residues).

This sequence belongs to the TamB family. In terms of assembly, part of the TIC complex, which can interact with components of the TOC complex to form a larger import complex. Interacts with the TOC complex component TOC75-3.

Its subcellular location is the plastid. It is found in the chloroplast inner membrane. The protein resides in the chloroplast intermembrane space. Functionally, part of the inner chloroplast membrane translocon complex (TIC) which associates with the outer chloroplast membrane translocon complex (TOC) and forms a supercomplex involved in protein precursor import into the chloroplast stroma. Required for the import of HSP93, TIC40 and RBCS protein precursors in the chloroplast stroma. Links the outer and inner membrane translocons of the chloroplast envelope. This Arabidopsis thaliana (Mouse-ear cress) protein is Protein TIC236, chloroplastic.